Reading from the N-terminus, the 255-residue chain is Carboxy-S-adenosyl-L-methionine synthase (255 aa).

S-adenosyl-L-methionine contacts are provided by residues Y45, 70 to 72 (GCS), 124 to 125 (DI), and N139.

This sequence belongs to the class I-like SAM-binding methyltransferase superfamily. Cx-SAM synthase family. As to quaternary structure, homodimer.

It catalyses the reaction prephenate + S-adenosyl-L-methionine = carboxy-S-adenosyl-L-methionine + 3-phenylpyruvate + H2O. Catalyzes the conversion of S-adenosyl-L-methionine (SAM) to carboxy-S-adenosyl-L-methionine (Cx-SAM). This is Carboxy-S-adenosyl-L-methionine synthase from Hamiltonella defensa subsp. Acyrthosiphon pisum (strain 5AT).